A 453-amino-acid polypeptide reads, in one-letter code: Bifunctional protein GlmU (453 aa).

Residues 1–225 (MNIVILAAGT…EWETLGVNSK (225 aa)) are pyrophosphorylase. UDP-N-acetyl-alpha-D-glucosamine contacts are provided by residues 6–9 (LAAG), Lys20, Gln71, 76–77 (GT), 98–100 (YGD), Gly135, Glu150, Asn165, and Asn223. Asp100 contributes to the Mg(2+) binding site. Asn223 contacts Mg(2+). The tract at residues 226–246 (QQLAELERIHQHNVADALLVA) is linker. Residues 247–453 (GVTLADPARL…GYVRPTKKKS (207 aa)) are N-acetyltransferase. UDP-N-acetyl-alpha-D-glucosamine is bound by residues Arg329 and Lys347. Catalysis depends on His359, which acts as the Proton acceptor. UDP-N-acetyl-alpha-D-glucosamine is bound by residues Tyr362 and Asn373. Acetyl-CoA-binding positions include Ala376, 382-383 (NY), Ser401, and Ala419.

This sequence in the N-terminal section; belongs to the N-acetylglucosamine-1-phosphate uridyltransferase family. In the C-terminal section; belongs to the transferase hexapeptide repeat family. As to quaternary structure, homotrimer. It depends on Mg(2+) as a cofactor.

It localises to the cytoplasm. The enzyme catalyses alpha-D-glucosamine 1-phosphate + acetyl-CoA = N-acetyl-alpha-D-glucosamine 1-phosphate + CoA + H(+). It carries out the reaction N-acetyl-alpha-D-glucosamine 1-phosphate + UTP + H(+) = UDP-N-acetyl-alpha-D-glucosamine + diphosphate. It functions in the pathway nucleotide-sugar biosynthesis; UDP-N-acetyl-alpha-D-glucosamine biosynthesis; N-acetyl-alpha-D-glucosamine 1-phosphate from alpha-D-glucosamine 6-phosphate (route II): step 2/2. It participates in nucleotide-sugar biosynthesis; UDP-N-acetyl-alpha-D-glucosamine biosynthesis; UDP-N-acetyl-alpha-D-glucosamine from N-acetyl-alpha-D-glucosamine 1-phosphate: step 1/1. The protein operates within bacterial outer membrane biogenesis; LPS lipid A biosynthesis. Its function is as follows. Catalyzes the last two sequential reactions in the de novo biosynthetic pathway for UDP-N-acetylglucosamine (UDP-GlcNAc). The C-terminal domain catalyzes the transfer of acetyl group from acetyl coenzyme A to glucosamine-1-phosphate (GlcN-1-P) to produce N-acetylglucosamine-1-phosphate (GlcNAc-1-P), which is converted into UDP-GlcNAc by the transfer of uridine 5-monophosphate (from uridine 5-triphosphate), a reaction catalyzed by the N-terminal domain. This Paraburkholderia phytofirmans (strain DSM 17436 / LMG 22146 / PsJN) (Burkholderia phytofirmans) protein is Bifunctional protein GlmU.